A 67-amino-acid polypeptide reads, in one-letter code: U-myrmeciitoxin(01)-Mg4a (67 aa).

A signal peptide spans 1-25 (MGKVFFFVLMIAIIGSTFLIEEALG).

This sequence belongs to the ant myrmeciitoxin-01 family. Homodimer; disulfide-linked. Post-translationally, contains 2 intrachain disulfide bonds (one per chain) and 1 interchain disulfide bond. In terms of tissue distribution, expressed by the venom gland.

Its subcellular location is the secreted. In Myrmecia gulosa (Red bulldog ant), this protein is U-myrmeciitoxin(01)-Mg4a.